Consider the following 150-residue polypeptide: MGRFISISFGLLVVFLSLSGTGAKQDCLSDWSFYEGYCYKVFNEKKTWEDAEKFCNEQVNGGYLVSFRSSEEMDFVIRMTFPIFRFDFFWIGLRDFWRDCYWRWSDGVNLDYKAWSREPNCFVSKTTDNQWLRWNCNDPRYFVCKSRVSC.

Positions 1-23 (MGRFISISFGLLVVFLSLSGTGA) are cleaved as a signal peptide. 3 cysteine pairs are disulfide-bonded: Cys27-Cys38, Cys55-Cys144, and Cys121-Cys136. Residues 34 to 145 (YEGYCYKVFN…CNDPRYFVCK (112 aa)) enclose the C-type lectin domain.

Belongs to the snaclec family. As to quaternary structure, heterodimer; disulfide-linked.

It is found in the secreted. Its function is as follows. Interferes with one step of hemostasis (modulation of platelet aggregation, or coagulation cascade, for example). The chain is Snaclec 7 from Daboia siamensis (Eastern Russel's viper).